Here is a 554-residue protein sequence, read N- to C-terminus: MKEQLRACILKGIEGCFADGTLTSGEVPAINVEKPAHAEHGDFATNVAMQMAKQQRKAPRAVAEILVAKLAGASDLIESLEIAGPGFINFFIKDGAWRRTLSEIDRAGDAWGKSGIGRGKKVQVEFVSANPTGPLHIGHGRGAATGDAVASLLSAAGFDVQREYYINDAGNQMNTLGLSGLLRYKELLGEKIEFPETCYQGDYMKDIARDAVTKYGDRFLKVSQEEGVAFFSKMGGDLILAGIDQDLQDFGVRFDHWFSEQSLFDEGKVNSAIEEMQAKGLIYEQEGALWFRTTDYGDDKDRVVVRSNGVTTYFASDIAYHRDKFARGFDWVIDVWGADHHGYVPRLKSVVQGLGRDASDLGIILVQLVSLLRDGVPVAMSTRSGEFVTLKEVVDEVGRDAARFFFLMRRSDSQLDFDLELAKRQSNDNPVYYVQYAHARIKSIFDTARERGVEPLFDSVKFELLQTPEDLSLIKKLSVYPEILEGGAVNFEPHRITYYLQELAGEFHSFYNKSRVITPEEPELTQARLFLLHCVAITLKNALTVLGISAPERM.

Positions Ala-129–His-139 match the 'HIGH' region motif.

Belongs to the class-I aminoacyl-tRNA synthetase family. As to quaternary structure, monomer.

The protein localises to the cytoplasm. It catalyses the reaction tRNA(Arg) + L-arginine + ATP = L-arginyl-tRNA(Arg) + AMP + diphosphate. The protein is Arginine--tRNA ligase of Geobacter sp. (strain M21).